The chain runs to 541 residues: Pseudokinase FAM20A (541 aa).

Positions 1–33 are cleaved as a signal peptide; it reads MPGLRRDRLLALLLLGALFSADLYFHLWPQVQR. N70, N145, and N287 each carry an N-linked (GlcNAc...) asparagine glycan. Cystine bridges form between C314–C330, C319–C323, C378–C452, and C453–C512. A glycan (N-linked (GlcNAc...) asparagine) is linked at N388. N-linked (GlcNAc...) asparagine glycosylation is present at N538.

The protein belongs to the FAM20 family. As to quaternary structure, interacts with FAM20C; probably forming a heterotetramer of 2 subunits of FAM20A and 2 subunits of FAM20C. In terms of processing, N-glycosylated. In the mammary gland, expressed at higher levels in lactating mice than in virgin mice. Observed throughout the tissues of the mandibular incisor, including the secretory and maturation stage ameloblasts, the suprabasal layers of the gingival epithelium and the odontoblasts. Weak expression in the enamel matrix.

The protein resides in the secreted. It is found in the golgi apparatus. Its subcellular location is the endoplasmic reticulum. In terms of biological role, pseudokinase that acts as an allosteric activator of the Golgi serine/threonine protein kinase FAM20C and is involved in biomineralization of teeth. Forms a complex with FAM20C and increases the ability of FAM20C to phosphorylate the proteins that form the 'matrix' that guides the deposition of the enamel minerals. The chain is Pseudokinase FAM20A from Mus musculus (Mouse).